The chain runs to 128 residues: DNA polymerase epsilon subunit 3 (128 aa).

A compositionally biased stretch (basic and acidic residues) spans 98–110; the sequence is EKKESKASKKDSN. Residues 98–128 form a disordered region; sequence EKKESKASKKDSNTAENANASATATAEEAPE. Residues 111–128 show a composition bias toward low complexity; it reads TAENANASATATAEEAPE.

As to quaternary structure, homodimer. Component of the DNA polymerase epsilon complex consisting of four subunits: the catalytic subunit PolE1/DNApol-epsilon255 and the accessory subunits PolE2/DNApol-epsilon58, Chrac-14/DNApolE3 and PolE4. Component of the chromatin accessibility complex (CHRAC), composed of Chrac-14, Chrac-16, Acf and Iswi. Forms an heterodimer with Chrac-16. The Chrac-14/Chrac-16 heterodimer interacts with Acf (via N-terminus). Interacts directly with Iswi and this interaction is further stabilized by association with Chrac-16. Component of the Ada2a-containing (ATAC) complex composed of at least Ada2a, Atac1, Hcf, Ada3, Gcn5, Mocs2B, Charac-14, Atac3, Atac2, NC2beta and wds. Interacts with cid.

It localises to the nucleus. Accessory component of the DNA polymerase epsilon complex. Participates in DNA repair and in chromosomal DNA replication. Histone-like protein which promotes nucleosome sliding of ATP-dependent nucleosome remodeling complexes. Part of the chromatin-accessibility complex (CHRAC) which uses energy/ATP to increase the general accessibility of DNA in chromatin. As a heterodimer with Chrac-16, binds DNA and facilitates nucleosome sliding by Acf. Has a role in DNA damage response by preventing cid mislocalization to chromatin. This is DNA polymerase epsilon subunit 3 from Drosophila melanogaster (Fruit fly).